A 392-amino-acid polypeptide reads, in one-letter code: Succinate--CoA ligase [ADP-forming] subunit beta (392 aa).

The ATP-grasp domain occupies 9–247; the sequence is KEILRVCGVP…LYEEDPKEIE (239 aa). ATP-binding positions include Lys-49, 56-58, Glu-102, Gln-105, and Glu-110; that span reads GRG. Residues Asn-202 and Asp-216 each contribute to the Mg(2+) site. Residues Asn-267 and 324 to 326 each bind substrate; that span reads GIM.

This sequence belongs to the succinate/malate CoA ligase beta subunit family. In terms of assembly, heterotetramer of two alpha and two beta subunits. It depends on Mg(2+) as a cofactor.

It carries out the reaction succinate + ATP + CoA = succinyl-CoA + ADP + phosphate. It catalyses the reaction GTP + succinate + CoA = succinyl-CoA + GDP + phosphate. It participates in carbohydrate metabolism; tricarboxylic acid cycle; succinate from succinyl-CoA (ligase route): step 1/1. In terms of biological role, succinyl-CoA synthetase functions in the citric acid cycle (TCA), coupling the hydrolysis of succinyl-CoA to the synthesis of either ATP or GTP and thus represents the only step of substrate-level phosphorylation in the TCA. The beta subunit provides nucleotide specificity of the enzyme and binds the substrate succinate, while the binding sites for coenzyme A and phosphate are found in the alpha subunit. The protein is Succinate--CoA ligase [ADP-forming] subunit beta of Neorickettsia sennetsu (strain ATCC VR-367 / Miyayama) (Ehrlichia sennetsu).